We begin with the raw amino-acid sequence, 662 residues long: F-box/WD repeat-containing protein pof10 (662 aa).

A compositionally biased stretch (polar residues) spans 1–16 (MKSEPTSLDFTSSNLR). Positions 1–27 (MKSEPTSLDFTSSNLRRMNRDHSSNNT) are disordered. Positions 28–74 (NRTVLNLPKEILIIIFSFLDPRSLLSAQCTCKYWKKLLSDDLSWRTA) constitute an F-box domain. WD repeat units follow at residues 215 to 260 (SHAD…SLQS), 263 to 302 (FRSS…GYAR), and 429 to 468 (TAYS…FLKK). Residues 581-600 (SEEEIIAYVTMLSQEEEAKR) form the UIM 1 domain. Residues 617–645 (ENDEQATSSLNALSSNHEPPQEQANVAEL) are disordered. Positions 621 to 640 (QATSSLNALSSNHEPPQEQA) are enriched in polar residues. The UIM 2 domain occupies 646 to 662 (NEQEQIELAMRLSLMEM).

As to quaternary structure, part of a SCF (SKP1-cullin-F-box) protein ligase complex. Interacts with skp1.

The protein resides in the cytoplasm. Its function is as follows. Probably recognizes and binds to some phosphorylated proteins and promotes their ubiquitination and degradation. The polypeptide is F-box/WD repeat-containing protein pof10 (pof10) (Schizosaccharomyces pombe (strain 972 / ATCC 24843) (Fission yeast)).